The sequence spans 133 residues: Ribosome-binding factor A (133 aa).

The protein belongs to the RbfA family. As to quaternary structure, monomer. Binds 30S ribosomal subunits, but not 50S ribosomal subunits or 70S ribosomes.

It localises to the cytoplasm. Functionally, one of several proteins that assist in the late maturation steps of the functional core of the 30S ribosomal subunit. Associates with free 30S ribosomal subunits (but not with 30S subunits that are part of 70S ribosomes or polysomes). Required for efficient processing of 16S rRNA. May interact with the 5'-terminal helix region of 16S rRNA. The protein is Ribosome-binding factor A of Klebsiella pneumoniae (strain 342).